We begin with the raw amino-acid sequence, 196 residues long: UPF0340 protein TT_C0214 (196 aa).

Belongs to the UPF0340 family.

The chain is UPF0340 protein TT_C0214 from Thermus thermophilus (strain ATCC BAA-163 / DSM 7039 / HB27).